The sequence spans 136 residues: Immunoglobulin J chain (136 aa).

3 disulfide bridges follow: cysteine 12–cysteine 100, cysteine 71–cysteine 91, and cysteine 108–cysteine 133. Asparagine 48 is a glycosylation site (N-linked (GlcNAc...) (complex) asparagine).

In terms of assembly, part of the secretory IgA (sIgA) complex that consists of two, four or five IgA monomers, and two additional non-Ig polypeptides, namely the JCHAIN and the secretory component (the proteolytic product of PIGR). Part of the secretory IgM (sIgM) complex that consist of five IgM monomers, and two additional non-Ig polypeptides, namely the JCHAIN and the secretory component (the proteolytic product of PIGR). JCHAIN-containing IgM interacts (via CH4 domain) with FCRM (via Ig-like domain).

It localises to the secreted. Its function is as follows. Serves to link two monomer units of either IgM or IgA. In the case of IgM, the J chain-joined dimer is a nucleating unit for the IgM pentamer, and in the case of IgA it induces dimers and/or larger polymers. It also helps to bind these immunoglobulins to secretory component. This chain is Immunoglobulin J chain, found in Oryctolagus cuniculus (Rabbit).